The sequence spans 510 residues: Pantetheinase (510 aa).

The first 22 residues, 1 to 22 (MIMSQLLNYVAVLFFCVSRASS), serve as a signal peptide directing secretion. The region spanning 31-307 (YEHAVILPNA…GKLLLAQLDS (277 aa)) is the CN hydrolase domain. Asn-39 carries an N-linked (GlcNAc...) asparagine glycan. Catalysis depends on Glu-80, which acts as the Proton acceptor. N-linked (GlcNAc...) asparagine glycosylation is found at Asn-87 and Asn-147. The Proton donor role is filled by Lys-179. Asn-201 carries an N-linked (GlcNAc...) asparagine glycan. Cys-212 functions as the Nucleophile in the catalytic mechanism. Residues Asn-316 and Asn-354 are each glycosylated (N-linked (GlcNAc...) asparagine). Asp-492 carries the GPI-anchor amidated aspartate lipid modification. The propeptide at 493-510 (LTTQALRLNPKTDAWKSK) is removed in mature form. A glycan (O-linked (GalNAc...) threonine) is linked at Thr-504.

Belongs to the carbon-nitrogen hydrolase superfamily. BTD/VNN family. In terms of assembly, monomer.

Its subcellular location is the cell membrane. It catalyses the reaction (R)-pantetheine + H2O = cysteamine + (R)-pantothenate. In terms of biological role, amidohydrolase that hydrolyzes specifically one of the carboamide linkages in D-pantetheine thus recycling pantothenic acid (vitamin B5) and releasing cysteamine. This is Pantetheinase (VNN1) from Bos taurus (Bovine).